The following is a 592-amino-acid chain: Anaphase-promoting complex subunit 8 (592 aa).

8 TPR repeats span residues 66-99 (EYYKYILAKNYFDLKEYRRCSDVLIDCNKYQLPI), 160-193 (QQQQQQQQQKIEQCQEFKQLFQFYKKLYIENKKD), 291-324 (TYILAQTAIGNYNLRAYDIGEELFERLIELEPNR), 359-392 (PETCCIIGNYYSLKLEHDKAILYFQRALKLNDRY), 393-426 (LSAWTLIGHEFLEIKNVSAAINAYRKAVDINPRD), 428-460 (RAWYGLGQTYQLLKLPLYSLYYFKKATTLRPYD), 461-494 (PRMWCAAGGCYEFIERIPEAIKCYERAEENYDRE), and 496-528 (VAINKLAKLYQEIQNNEKAAFYYKKNLYYCDQE). Residues 129-166 (QQQAQQQAQQAQQESQQNDKNNDTNNNNKTDQQQQQQQ) are disordered.

The protein belongs to the APC8/CDC23 family. The APC/C is composed of at least 13 subunits that stay tightly associated throughout the cell cycle: anapc1, anapc2, anapc3, anapc4, anapc5, anapc6, anapc7, anapc8, anapc10, anapc11, cdc20, cdc26 and cdh1.

It localises to the nucleus. Its pathway is protein modification; protein ubiquitination. Its function is as follows. Component of the anaphase promoting complex/cyclosome (APC/C), a cell cycle-regulated E3 ubiquitin-protein ligase complex that controls progression through mitosis and the G1 phase of the cell cycle. The polypeptide is Anaphase-promoting complex subunit 8 (anapc8) (Dictyostelium discoideum (Social amoeba)).